A 433-amino-acid chain; its full sequence is Glutamyl-tRNA reductase (433 aa).

Residues 49–52 (TCNR), S114, 119–121 (EPQ), and Q125 each bind substrate. C50 acts as the Nucleophile in catalysis. Position 201–206 (201–206 (GAGETI)) interacts with NADP(+).

The protein belongs to the glutamyl-tRNA reductase family. Homodimer.

It catalyses the reaction (S)-4-amino-5-oxopentanoate + tRNA(Glu) + NADP(+) = L-glutamyl-tRNA(Glu) + NADPH + H(+). It functions in the pathway porphyrin-containing compound metabolism; protoporphyrin-IX biosynthesis; 5-aminolevulinate from L-glutamyl-tRNA(Glu): step 1/2. Catalyzes the NADPH-dependent reduction of glutamyl-tRNA(Glu) to glutamate 1-semialdehyde (GSA). In Histophilus somni (strain 2336) (Haemophilus somnus), this protein is Glutamyl-tRNA reductase.